The chain runs to 347 residues: MSLEIQDSEVDIVIAALQPNLTTFFEAWRPFFSRFHIIVVKDPDMAEELQIPTGFDLKVYTKSDMGVLGATSIDFSGHSCRYFGYLVSRKKYVISIDDNCLPAKDNGGLTVDAVAQHMSNLKTPATPFFFNTLYDPFRKGADFVRGYPFSLREGVECMLSCGLWLHNADYDPMTHVVKRNQRNTTYVDAVMTVPLGAMMPVSGINVAFNREVLGPVMFPALRLRKEGKHRWDTLEDVWNGLCAKVVCDRLRYGVKTGLPYVMRSDAEAGKALESLKEWEGVKVMDVVLPFFESLKLSSTSVTVEDCVKELTSIVKEKLGPQNAIFAKAADAMEEWTKLWKSHGAQSA.

R145 is a glycosylation site (N-linked (Glc...) arginine).

Belongs to the RGP family. As to quaternary structure, heteromers with UAM1 and UAM3. Is not reversibly glycosylated in vitro by UDP-glucose, UDP-xylose and UDP-galactose.

It is found in the golgi apparatus. Functionally, probable inactive UDP-L-arabinose mutase. Inactive in vitro, but associates with UAM1 and UAM3. The protein is Probable inactive UDP-arabinopyranose mutase 2 of Oryza sativa subsp. japonica (Rice).